The following is a 2493-amino-acid chain: Polyprotein P1234 (2493 aa).

In terms of domain architecture, Alphavirus-like MT spans 28–259; that stretch reads EAKQVTDNDH…EKRDLLRSWH (232 aa). The nsP1 membrane-binding stretch occupies residues 244–263; sequence GSTIYHEKRDLLRSWHLPSV. Cys-419 carries the S-palmitoyl cysteine; by host lipid modification. Positions 690 to 841 constitute a (+)RNA virus helicase ATP-binding domain; the sequence is ELVDPPFHEF…HEICTQVFHK (152 aa). Residue 721-728 participates in a ribonucleoside 5'-triphosphate binding; that stretch reads GVPGSGKS. Positions 842-990 constitute a (+)RNA virus helicase C-terminal domain; it reads SISRRCTKSV…IEEWQAEHDA (149 aa). A Peptidase C9 domain is found at 1003-1322; it reads DVFQNKANVC…STLTNIYTGS (320 aa). The segment at 1004-1023 is nucleolus localization signal; sequence VFQNKANVCWAKALVPVLKT. The For cysteine protease nsP2 activity role is filled by Cys-1012. The Nuclear export signal signature appears at 1056-1065; sequence VRFFGLDLDS. Residue His-1081 is the For cysteine protease nsP2 activity of the active site. The Nuclear localization signal signature appears at 1179 to 1183; the sequence is PGKKV. The Macro domain maps to 1330-1489; that stretch reads APSYHVVRGD…TLKEAVARRE (160 aa). Residues Asp-1339, Asn-1353, Gly-1361, Gly-1441, Ile-1442, and Phe-1443 each contribute to the ADP-D-ribose site. The Zn(2+) site is built by Cys-1596, Cys-1598, Cys-1621, and Cys-1639. Disordered stretches follow at residues 1664–1684 and 1790–1826; these read PVEE…TPEQ and APRT…STPP. Residues 1814–1823 show a composition bias toward polar residues; it reads RASSRTSLVS. 2 repeat units span residues 1818–1839 and 1852–1873. Positions 1818–1873 are 2 X 21 AA approximate repeats, binding to host FXR family members; that stretch reads RTSLVSTPPGVNRVITREELEALTPSRAPSRSASRTSLVSNPPGVNRVITREEFEA. Positions 2250-2365 constitute a RdRp catalytic domain; that stretch reads DCVLETDIAS…KGVKSDKLMA (116 aa).

Interacts with non-structural protein 3. Interacts with RNA-directed RNA polymerase nsP4. Interacts with protease nsP2. interacts with itself. In terms of assembly, interacts with mRNA-capping enzyme nsP1. Interacts with host DDX1. Interacts with host DDX3. Interacts (via C-terminus) with host FXR1; this interaction inhibits the formation of host stress granules on viral mRNAs and the nsp3-FXR1 complexes bind viral RNAs and probably orchestrate the assembly of viral replication complexes. Interacts (via C-terminus) with host FXR2; this interaction inhibits the formation of host stress granules on viral mRNAs and the nsp3-FXR2 complexes bind viral RNAs and probably orchestrate the assembly of viral replication complexes. Interacts (via C-terminus) with host FMR1; this interaction inhibits the formation of host stress granules on viral mRNAs and the nsp3-FMR1 complexes bind viral RNAs and probably orchestrate the assembly of viral replication complexes. As to quaternary structure, interacts with mRNA-capping enzyme nsP1. Interacts with protease nsP2. interacts with itself. Interacts with RNA-directed RNA polymerase nsP4. Interacts with mRNA-capping enzyme nsP1. Interacts with KPNA1/karyopherin-alpha1; this interaction probably allows the active transport of protease nsP2 into the host nucleus. Mg(2+) serves as cofactor. Requires Mn(2+) as cofactor. Specific enzymatic cleavages in vivo yield mature proteins. The processing of the polyprotein is temporally regulated. In early stages (1.7 hpi), P1234 is first cleaved in trans through its nsP2 protease activity, releasing P123' and nsP4, which associate to form the early replication complex. At the same time, P1234 is also cut at the nsP1/nsP2 site early in infection but with lower efficiency. After replication of the viral minus-strand RNAs (4 hpi), the polyproteins are cut at the nsP1/nsP2 and nsP2/nsP3 sites very efficiently, preventing accumulation of P123' and P1234 and allowing the formation of the late replication complex. NsP3'/nsP4 site is not cleaved anymore and P34 is produced rather than nsP4. Post-translationally, specific enzymatic cleavages in vivo yield mature proteins. The processing of the polyprotein is temporally regulated. In early stages (1.7 hpi), P123 is cleaved at the nsP1/nsP2 site with low efficiency. After replication of the viral minus-strand RNAs (4 hpi), the polyproteins are cut at the nsP1/nsP2 and nsP2/nsP3 sites very efficiently, preventing accumulation of P123 and allowing the formation of the late replication complex. In terms of processing, specific enzymatic cleavages in vivo yield mature proteins. The processing of the polyprotein is temporally regulated. In early stages (1.7 hpi), P123' is cleaved at the nsP1/nsP2 site with low efficiency. After replication of the viral minus-strand RNAs (4 hpi), the polyproteins are cut at the nsP1/nsP2 and nsP2/nsP3 sites very efficiently, preventing accumulation of P123' and allowing the formation of the late replication complex. Palmitoylated by host palmitoyltransferases ZDHHC2 and ZDHHC19. Post-translationally, phosphorylated by host on serines and threonines. In terms of processing, ubiquitinated; targets the protein for rapid degradation via the ubiquitin system. Nsp4 is present in extremely low quantities due to low frequency of translation through the amber stop-codon and the degradation by the ubiquitin pathway.

It localises to the host cytoplasmic vesicle membrane. The protein resides in the host cell membrane. Its subcellular location is the host cell projection. The protein localises to the host filopodium. It is found in the host nucleus. It localises to the host cytoplasm. The enzyme catalyses GTP + S-adenosyl-L-methionine = N(7)-methyl-GTP + S-adenosyl-L-homocysteine. It catalyses the reaction N(7)-methyl-GTP + L-histidyl-[protein] = N(tele)-(N(7)-methylguanosine 5'-phospho)-L-histidyl-[protein] + diphosphate. The catalysed reaction is N(tele)-(N(7)-methylguanosine 5'-phospho)-L-histidyl-[protein] + a 5'-end diphospho-(purine-ribonucleoside) in mRNA + H(+) = a 5'-end (N(7)-methyl 5'-triphosphoguanosine)-(purine-ribonucleoside) in mRNA + L-histidyl-[protein]. It carries out the reaction a 5'-end triphospho-ribonucleoside in mRNA + H2O = a 5'-end diphospho-ribonucleoside in mRNA + phosphate + H(+). The enzyme catalyses a ribonucleoside 5'-triphosphate + H2O = a ribonucleoside 5'-diphosphate + phosphate + H(+). It catalyses the reaction ATP + H2O = ADP + phosphate + H(+). The catalysed reaction is RNA(n) + a ribonucleoside 5'-triphosphate = RNA(n+1) + diphosphate. It carries out the reaction 4-O-(ADP-D-ribosyl)-L-aspartyl-[protein] + H2O = L-aspartyl-[protein] + ADP-D-ribose + H(+). The enzyme catalyses 5-O-(ADP-D-ribosyl)-L-glutamyl-[protein] + H2O = L-glutamyl-[protein] + ADP-D-ribose + H(+). It catalyses the reaction RNA(n) + ATP = RNA(n)-3'-adenine ribonucleotide + diphosphate. The catalysed reaction is ADP-alpha-D-ribose 1''-phosphate + H2O = ADP-D-ribose + phosphate. Inhibited by sinefungin. Functionally, inactive precursor of the viral replicase, which is activated by cleavages carried out by the viral protease nsP2. Its function is as follows. The early replication complex formed by the polyprotein P123 and nsP4 synthesizes the minus-strand RNAs (antigenome). Polyprotein P123 is a short-lived polyprotein that accumulates during early stage of infection. As soon P123 is cleaved into mature proteins, the plus-strand RNAs synthesis begins. The early replication complex formed by the polyprotein P123' and nsP4 synthesizes minus-strand RNAs (antigenome). Polyprotein P123' is a short-lived polyprotein that accumulates during early stage of infection. As soon P123' is cleaved into mature proteins, the plus-strand RNAs synthesis begins. In terms of biological role, cytoplasmic capping enzyme that catalyzes two virus-specific reactions: methyltransferase and nsP1 guanylyltransferase. mRNA-capping is necessary since all viral RNAs are synthesized in the cytoplasm, and host capping enzymes are restricted to the nucleus. The enzymatic reaction involves a covalent link between 7-methyl-GMP and nsP1, whereas eukaryotic capping enzymes form a covalent complex only with GMP. NsP1 capping consists in the following reactions: GTP is first methylated into 7-methyl-GMP and then is covalently linked to nsP1 to form the m7GMp-nsP1 complex from which 7-methyl-GMP complex is transferred to the mRNA to create the cap structure. NsP1 is also needed for the initiation of the minus-strand RNAs synthesis. Probably serves as a membrane anchor for the replication complex composed of nsP1-nsP4. Nsp1 is needed for the initiation of the minus-strand RNAs synthesis. Palmitoylated nsP1 is remodeling host cell cytoskeleton, and induces filopodium-like structure formation at the surface of the host cell. Functionally, multifunctional protein whose N-terminus is part of the RNA polymerase complex and displays NTPase, RNA triphosphatase and helicase activities. NTPase and RNA triphosphatase are involved in viral RNA capping and helicase keeps a check on the dsRNA replication intermediates. The C-terminus harbors a protease that specifically cleaves the polyproteins and releases the mature proteins. Required for the shutoff of minus-strand RNAs synthesis. Inhibits host translation to ensure maximal viral gene expression and evade host immune response. Its function is as follows. Seems to be essential for minus-strand RNAs and subgenomic 26S mRNAs synthesis. Displays mono-ADP-ribosylhydrolase activity. ADP-ribosylation is a post-translational modification that controls various processes of the host cell and the virus probably needs to revert it for optimal viral replication. Binds proteins of FXR family and sequesters them into the viral RNA replication complexes thereby inhibiting the formation of host stress granules on viral mRNAs. The nsp3-FXR complexes bind viral RNAs and probably orchestrate the assembly of viral replication complexes, thanks to the ability of FXR family members to self-assemble and bind DNA. Seems to be essential for minus-strand RNAs and subgenomic 26S mRNAs synthesis. Displays mono-ADP-ribosylhydrolase activity. ADP-ribosylation is a post-translational modification that controls various processes of the host cell and the virus probably needs to revert it for optimal viral replication. Binds proteins of FXR family and sequesters them into the viral RNA replication complexes thereby inhibiting the formation of host stress granules on viral mRNAs. The nsp3'-FXR complexes bind viral RNAs and probably orchestrate the assembly of viral replication complexes, thanks to the ability of FXR family members to self-assemble and bind DNA. In terms of biological role, RNA dependent RNA polymerase. Replicates genomic and antigenomic RNA by recognizing replications specific signals. The early replication complex formed by the polyprotein P123 and nsP4 synthesizes minus-strand RNAs. The late replication complex composed of fully processed nsP1-nsP4 is responsible for the production of genomic and subgenomic plus-strand RNAs. The chain is Polyprotein P1234 from Bos taurus (Bovine).